The primary structure comprises 159 residues: Trafficking protein particle complex subunit 6A (159 aa).

A Phosphoserine modification is found at Ser33.

It belongs to the TRAPP small subunits family. BET3 subfamily. In terms of assembly, part of the multisubunit transport protein particle (TRAPP) complex. Heterodimer with TRAPPC3. The heterodimer TRAPPC3-TRAPPC6A interacts with TRAPPC2L. Interacts with TRAPPC2L. In terms of tissue distribution, ubiquitous, with lowest expression in skeletal muscle and brain and highest in kidney, liver and testis, as well as in cultured melanocytes.

Its subcellular location is the golgi apparatus. The protein localises to the cis-Golgi network. It localises to the endoplasmic reticulum. In terms of biological role, may play a role in vesicular transport during the biogenesis of melanosomes. In Mus musculus (Mouse), this protein is Trafficking protein particle complex subunit 6A.